The following is a 60-amino-acid chain: Cytotoxin 3 (60 aa).

4 disulfides stabilise this stretch: Cys-3–Cys-21, Cys-14–Cys-38, Cys-42–Cys-53, and Cys-54–Cys-59.

Belongs to the three-finger toxin family. Short-chain subfamily. Type IA cytotoxin sub-subfamily. In terms of assembly, monomer in solution; Homodimer and oligomer in the presence of negatively charged lipids forming a pore with a size ranging between 20 and 30 Angstroms. As to expression, expressed by the venom gland.

The protein localises to the secreted. It is found in the target cell membrane. Shows cytolytic activity on many different cells by forming pore in lipid membranes. In vivo, increases heart rate or kills the animal by cardiac arrest. In addition, it binds to heparin with high affinity, interacts with Kv channel-interacting protein 1 (KCNIP1) in a calcium-independent manner, and binds to integrin alpha-V/beta-3 (ITGAV/ITGB3) with moderate affinity. This is Cytotoxin 3 from Naja annulifera (Banded Egyptian cobra).